We begin with the raw amino-acid sequence, 572 residues long: Fusion glycoprotein F0 (572 aa).

The signal sequence occupies residues 1 to 25; that stretch reads MATTTMRMIISIILISTYVPHITLC. Over 26-522 the chain is Extracellular; that stretch reads QNITEEFYQS…SVDVGKSTTN (497 aa). Asn27 and Asn70 each carry an N-linked (GlcNAc...) asparagine; by host glycan. Disulfide bonds link Cys37–Cys437, Cys69–Cys212, Cys311–Cys341, Cys320–Cys331, Cys356–Cys365, Cys380–Cys391, and Cys414–Cys420. A coiled-coil region spans residues 76 to 96; the sequence is VKLIKQELERYNNAVAELQSL. Asn120 carries an N-linked (GlcNAc...) asparagine; by host glycan. Positions 137 to 157 are fusion peptide; sequence FLGFLLGIGSAIASGVAVSKV. A coiled-coil region spans residues 156-207; the sequence is KVLHLEGEVNKIKNALLSTNKAVVSLSNGVSVLTSKVLDLKNYIDKELLPKV. Residues 479–514 are a coiled coil; sequence LVFPSDEFDASIAQVNAKINQSLAFIRRSDELLHSV. A glycan (N-linked (GlcNAc...) asparagine; by host) is linked at Asn498. Residues 523-548 traverse the membrane as a helical segment; the sequence is VVITTIIIVIVVVILMLITVGLLFYC. Residue Cys548 is the site of S-palmitoyl cysteine; by host attachment. Residues 549-572 lie on the Cytoplasmic side of the membrane; sequence KTRSTPIMLGKDQLSSINNLSFSK.

The protein belongs to the paramyxoviruses fusion glycoprotein family. As to quaternary structure, homotrimer. Heterodimer with fusion protein F2; disulfide-linked. Part of a complex composed of F1, F2 and G glycoproteins. As a heterodimer with F2, interacts with host RHOA; this interaction facilitates virus-induced syncytium formation. Homotrimer. Heterodimer with fusion protein F1; disulfide-linked. Part of a complex composed of F1, F2 and G glycoproteins. As a heterodimer with F1, interacts with host RHOA; this interaction facilitates virus-induced syncytium formation. Post-translationally, the F glycoprotein is synthesized as a F0 inactive precursor that is heavily N-glycosylated and processed at two sites by a host furin-like protease probably in the Golgi. The cleavage site between p27 and F1 may occur after endocytosis to yield the mature F1 and F2 proteins. Both cleavages are required for membrane fusion and p27 is released from the processed protein.

The protein localises to the host Golgi apparatus membrane. Its subcellular location is the virion membrane. The protein resides in the host cell membrane. Its function is as follows. Inactive precursor that is cleaved at two sites by a furin-like protease to give rise to the mature F1 and F2 fusion glycoproteins. Functionally, class I viral fusion protein. Under the current model, the protein has at least 3 conformational states: pre-fusion native state, pre-hairpin intermediate state, and post-fusion hairpin state. During viral and plasma cell membrane fusion, the coiled coil regions assume a trimer-of-hairpins structure, positioning the fusion peptide in close proximity to the C-terminal region of the ectodomain. The formation of this structure appears to drive apposition and subsequent fusion of viral and cellular membranes leading to delivery of the nucleocapsid into the cytoplasm. This fusion is pH independent and occurs at the plasma or endosomal membrane. The trimer of F1-F2 (F protein) also facilitates the attachment and entry into the host cell. Later in infection, F protein expressed at the plasma membrane of infected cells can mediate fusion with adjacent cells to form syncytia, a cytopathic effect that could lead to tissue necrosis. Major determinant of the species specificity of RSV infection. The trimer of F1-F2 (F protein) also facilitates the attachment and entry into the host cell. Later in infection, F protein expressed at the plasma membrane of infected cells can mediate fusion with adjacent cells to form syncytia, a cytopathic effect that could lead to tissue necrosis. The sequence is that of Fusion glycoprotein F0 (F) from Bovine respiratory syncytial virus (strain A51908) (BRS).